The following is a 412-amino-acid chain: Proteasome-activating nucleotidase (412 aa).

The stretch at 15–73 forms a coiled coil; it reads EDIYQYLLERITNLENRNLELREQFRQMESEKRYVETQKIRYERELRKLKSEIEQLRSP. ATP contacts are provided by residues 197–202 and His-336; that span reads GTGKTL. A docks into pockets in the proteasome alpha-ring to cause gate opening region spans residues 410–412; the sequence is MFA.

Belongs to the AAA ATPase family. Homohexamer. The hexameric complex has a two-ring architecture resembling a top hat that caps the 20S proteasome core at one or both ends. Upon ATP-binding, the C-terminus of PAN interacts with the alpha-rings of the proteasome core by binding to the intersubunit pockets.

Its subcellular location is the cytoplasm. Its function is as follows. ATPase which is responsible for recognizing, binding, unfolding and translocation of substrate proteins into the archaeal 20S proteasome core particle. Is essential for opening the gate of the 20S proteasome via an interaction with its C-terminus, thereby allowing substrate entry and access to the site of proteolysis. Thus, the C-termini of the proteasomal ATPase function like a 'key in a lock' to induce gate opening and therefore regulate proteolysis. Unfolding activity requires energy from ATP hydrolysis, whereas ATP binding alone promotes ATPase-20S proteasome association which triggers gate opening, and supports translocation of unfolded substrates. The chain is Proteasome-activating nucleotidase from Methanoculleus marisnigri (strain ATCC 35101 / DSM 1498 / JR1).